The following is a 293-amino-acid chain: Small ribosomal subunit protein uS2 (293 aa).

The tract at residues 239–293 is disordered; it reads PAGGADWEAAPAGFPAAATGEWSEAQPATWESGAAAATGPSTEWADSAPKDTAGW. Residues 247–256 show a composition bias toward low complexity; it reads AAPAGFPAAA.

It belongs to the universal ribosomal protein uS2 family. In terms of assembly, component of the small ribosomal subunit. Mature ribosomes consist of a small (40S) and a large (60S) subunit. The 40S subunit contains about 33 different proteins and 1 molecule of RNA (18S). The 60S subunit contains about 49 different proteins and 3 molecules of RNA (25S, 5.8S and 5S). Interacts with RPS21.

Its subcellular location is the cytoplasm. Functionally, required for the assembly and/or stability of the 40S ribosomal subunit. Required for the processing of the 20S rRNA-precursor to mature 18S rRNA in a late step of the maturation of 40S ribosomal subunits. The sequence is that of Small ribosomal subunit protein uS2 from Chaetomium globosum (strain ATCC 6205 / CBS 148.51 / DSM 1962 / NBRC 6347 / NRRL 1970) (Soil fungus).